The chain runs to 89 residues: Small ribosomal subunit protein uS15 (89 aa).

Belongs to the universal ribosomal protein uS15 family. In terms of assembly, part of the 30S ribosomal subunit. Forms a bridge to the 50S subunit in the 70S ribosome, contacting the 23S rRNA.

One of the primary rRNA binding proteins, it binds directly to 16S rRNA where it helps nucleate assembly of the platform of the 30S subunit by binding and bridging several RNA helices of the 16S rRNA. Functionally, forms an intersubunit bridge (bridge B4) with the 23S rRNA of the 50S subunit in the ribosome. The sequence is that of Small ribosomal subunit protein uS15 from Geobacillus stearothermophilus (Bacillus stearothermophilus).